The primary structure comprises 139 residues: SDRKTVSCPECGKCFTSRTYLNVHKKVHTGQTYSCSECGKSFLSRSHLNTHLRTHTGEKPYSCSECGKCFTSSAILITHKRIHTGERPFSCQECGKSFSYRSVFMEHQKIHTGEKPFSCSDCGKCFRYRSHLKVHSRIH.

5 consecutive C2H2-type zinc fingers follow at residues 6 to 28 (VSCP…KKVH), 33 to 55 (YSCS…LRTH), 61 to 83 (YSCS…KRIH), 89 to 111 (FSCQ…QKIH), and 117 to 139 (FSCS…SRIH).

The protein belongs to the krueppel C2H2-type zinc-finger protein family.

Its subcellular location is the nucleus. Its function is as follows. May be involved in transcriptional regulation. The sequence is that of Gastrula zinc finger protein XlCGF67.1 from Xenopus laevis (African clawed frog).